The sequence spans 561 residues: Eukaryotic translation initiation factor 3 subunit D-1 (561 aa).

The segment at 98-164 (VQKPPHQRGR…RGPPPKMRES (67 aa)) is disordered. Positions 100–121 (KPPHQRGRFRNMRNSRSGRGRN) are enriched in basic residues. Thr128 is subject to Phosphothreonine. Positions 289–303 (EFDLLTVNETSVEPP) are RNA gate.

Belongs to the eIF-3 subunit D family. As to quaternary structure, component of the eukaryotic translation initiation factor 3 (eIF-3) complex. The eIF-3 complex interacts with pix.

It localises to the cytoplasm. MRNA cap-binding component of the eukaryotic translation initiation factor 3 (eIF-3) complex, which is involved in protein synthesis of a specialized repertoire of mRNAs and, together with other initiation factors, stimulates binding of mRNA and methionyl-tRNAi to the 40S ribosome. The eIF-3 complex specifically targets and initiates translation of a subset of mRNAs involved in cell proliferation. In the eIF-3 complex, eif3d specifically recognizes and binds the 7-methylguanosine cap of a subset of mRNAs. The protein is Eukaryotic translation initiation factor 3 subunit D-1 of Drosophila ananassae (Fruit fly).